Consider the following 513-residue polypeptide: MKNLLTNPQPSQSDYINAIVKLGSRVYEAAQVTPLQKMGKLSERLHNNIWIKREDRQPVNSFKLRGAYAMISSLSAEQKAAGVIAASAGNHAQGVALSAKQLGLKALIVMPQNTPSIKVDAVRGFGGEVLLHGANFDEAKAKAIELSKEKNMTFIPPFDHPLVIAGQGTLAMEMLQQVADLDYVFVQVGGGGLAAGVAILLKQFMPEIKIIGVESKDSACLKAALDKGEPTDLTHIGLFADGVAVKRIGDETFRLCQQYLDDMVLVDSDEVCAAMKDLFENVRAVAEPSGALGLAGLKKYVKQNHIEGKNMAAILSGANLNFHTLRYVSERCEIGENREALLAVTMPEQPGSFLKFAYVLGNRAVTEFSYRYADDKRACVFVGVRTTNEQEKADIIADLTKNGFDVEDMSDDDIAKTHVRYLMGGRAANDNERLYTFEFPEQKGALLKFLETLQNRWNISLFHYRAHGADYGNILAGFQIEQREQAEFEQGLAQLNYVFEDVTKSKSYRYFLR.

The residue at position 63 (K63) is an N6-(pyridoxal phosphate)lysine. Pyridoxal 5'-phosphate is bound by residues N90, G189–L193, and S316. 2 ACT-like domains span residues A340–D411 and R433–K504.

It belongs to the serine/threonine dehydratase family. As to quaternary structure, homotetramer. Pyridoxal 5'-phosphate serves as cofactor.

It carries out the reaction L-threonine = 2-oxobutanoate + NH4(+). It functions in the pathway amino-acid biosynthesis; L-isoleucine biosynthesis; 2-oxobutanoate from L-threonine: step 1/1. Catalyzes the anaerobic formation of alpha-ketobutyrate and ammonia from threonine in a two-step reaction. The first step involved a dehydration of threonine and a production of enamine intermediates (aminocrotonate), which tautomerizes to its imine form (iminobutyrate). Both intermediates are unstable and short-lived. The second step is the nonenzymatic hydrolysis of the enamine/imine intermediates to form 2-ketobutyrate and free ammonia. In the low water environment of the cell, the second step is accelerated by RidA. This Haemophilus influenzae (strain ATCC 51907 / DSM 11121 / KW20 / Rd) protein is L-threonine dehydratase biosynthetic IlvA (ilvA).